A 132-amino-acid chain; its full sequence is L-ectoine synthase (132 aa).

The protein belongs to the ectoine synthase family.

It catalyses the reaction (2S)-4-acetamido-2-aminobutanoate = L-ectoine + H2O. It participates in amine and polyamine biosynthesis; ectoine biosynthesis; L-ectoine from L-aspartate 4-semialdehyde: step 3/3. Catalyzes the circularization of gamma-N-acetyl-alpha,gamma-diaminobutyric acid (ADABA) to ectoine (1,4,5,6-tetrahydro-2-methyl-4-pyrimidine carboxylic acid), which is an excellent osmoprotectant. The sequence is that of L-ectoine synthase from Rhodococcus opacus (strain B4).